A 602-amino-acid polypeptide reads, in one-letter code: Cholinesterase (602 aa).

The N-terminal stretch at 1-28 (MQSRSTVIYIRFVLWFLLLWVLFEKSHT) is a signal peptide. N-linked (GlcNAc...) asparagine glycosylation is found at N85 and N134. 144 to 145 (GS) is a substrate binding site. S226 functions as the Acyl-ester intermediate in the catalytic mechanism. Position 226 is a phosphoserine (S226). N269 and N284 each carry an N-linked (GlcNAc...) asparagine glycan. Residue E353 is the Charge relay system of the active site. N-linked (GlcNAc...) asparagine glycosylation occurs at N369. Residue H466 is the Charge relay system of the active site. N-linked (GlcNAc...) asparagine glycosylation is found at N483, N509, N513, and N514.

It belongs to the type-B carboxylesterase/lipase family. As to quaternary structure, homotetramer; disulfide-linked. Dimer of dimers. Present in most cells except erythrocytes.

The protein localises to the secreted. The catalysed reaction is an acylcholine + H2O = a carboxylate + choline + H(+). Esterase with broad substrate specificity. Contributes to the inactivation of the neurotransmitter acetylcholine. Can degrade neurotoxic organophosphate esters. The polypeptide is Cholinesterase (BCHE) (Bos taurus (Bovine)).